A 305-amino-acid polypeptide reads, in one-letter code: Olfactory receptor 5M11 (305 aa).

Residues 1–25 (MSNTNGSAITEFILLGLTDCPELQS) are Extracellular-facing. Residue asparagine 5 is glycosylated (N-linked (GlcNAc...) asparagine). Residues 26–46 (LLFVLFLVVYLVTLLGNLGMI) form a helical membrane-spanning segment. Topologically, residues 47 to 54 (MLMRLDSR) are cytoplasmic. The helical transmembrane segment at 55-75 (LHTPMYFFLTNLAFVDLCYTS) threads the bilayer. Over 76–98 (NATPQMSTNIVSEKTISFAGCFT) the chain is Extracellular. A disulfide bond links cysteine 96 and cysteine 188. The helical transmembrane segment at 99–119 (QCYIFIALLLTEFYMLAAMAY) threads the bilayer. The Cytoplasmic segment spans residues 120 to 138 (DRYVAIYDPLRYSVKTSRR). Residues 139-159 (VCICLATFPYVYGFSDGLFQA) form a helical membrane-spanning segment. Topologically, residues 160–195 (ILTFRLTFCRSSVINHFYCADPPLIKLSCSDTYVKE) are extracellular. The chain crosses the membrane as a helical span at residues 196–216 (HAMFISAGFNLSSSLTIVLVS). Residues 217–236 (YAFILAAILRIKSAEGRHKA) are Cytoplasmic-facing. Residues 237–257 (FSTCGSHMMAVTLFYGTLFCM) form a helical membrane-spanning segment. The Extracellular segment spans residues 258-270 (YIRPPTDKTVEES). A helical transmembrane segment spans residues 271-291 (KIIAVFYTFVSPVLNPLIYSL). Residues 292-305 (RNKDVKQALKNVLR) lie on the Cytoplasmic side of the membrane.

The protein belongs to the G-protein coupled receptor 1 family.

The protein localises to the cell membrane. Odorant receptor. The chain is Olfactory receptor 5M11 (OR5M11) from Homo sapiens (Human).